The chain runs to 460 residues: Bifunctional protein GlmU (460 aa).

The interval 1–229 is pyrophosphorylase; the sequence is MTNYAIILAA…FNESLGVNDR (229 aa). UDP-N-acetyl-alpha-D-glucosamine-binding positions include 8–11, Lys-22, Gln-72, and 77–78; these read LAAG and GT. Position 102 (Asp-102) interacts with Mg(2+). Positions 139, 154, 169, and 227 each coordinate UDP-N-acetyl-alpha-D-glucosamine. Residue Asn-227 participates in Mg(2+) binding. Residues 230–250 form a linker region; that stretch reads VALATAETVMRQRITQKHMVN. Positions 251–460 are N-acetyltransferase; the sequence is GVTFHNPETV…RLAHHPSRSK (210 aa). UDP-N-acetyl-alpha-D-glucosamine-binding residues include Arg-332 and Lys-350. The active-site Proton acceptor is the His-362. UDP-N-acetyl-alpha-D-glucosamine-binding residues include Tyr-365 and Asn-376. Residues Ala-379, 385–386, Ser-404, Ala-422, and Arg-439 each bind acetyl-CoA; that span reads NY.

In the N-terminal section; belongs to the N-acetylglucosamine-1-phosphate uridyltransferase family. The protein in the C-terminal section; belongs to the transferase hexapeptide repeat family. In terms of assembly, homotrimer. Mg(2+) serves as cofactor.

Its subcellular location is the cytoplasm. The enzyme catalyses alpha-D-glucosamine 1-phosphate + acetyl-CoA = N-acetyl-alpha-D-glucosamine 1-phosphate + CoA + H(+). It catalyses the reaction N-acetyl-alpha-D-glucosamine 1-phosphate + UTP + H(+) = UDP-N-acetyl-alpha-D-glucosamine + diphosphate. Its pathway is nucleotide-sugar biosynthesis; UDP-N-acetyl-alpha-D-glucosamine biosynthesis; N-acetyl-alpha-D-glucosamine 1-phosphate from alpha-D-glucosamine 6-phosphate (route II): step 2/2. The protein operates within nucleotide-sugar biosynthesis; UDP-N-acetyl-alpha-D-glucosamine biosynthesis; UDP-N-acetyl-alpha-D-glucosamine from N-acetyl-alpha-D-glucosamine 1-phosphate: step 1/1. It functions in the pathway bacterial outer membrane biogenesis; LPS lipid A biosynthesis. In terms of biological role, catalyzes the last two sequential reactions in the de novo biosynthetic pathway for UDP-N-acetylglucosamine (UDP-GlcNAc). The C-terminal domain catalyzes the transfer of acetyl group from acetyl coenzyme A to glucosamine-1-phosphate (GlcN-1-P) to produce N-acetylglucosamine-1-phosphate (GlcNAc-1-P), which is converted into UDP-GlcNAc by the transfer of uridine 5-monophosphate (from uridine 5-triphosphate), a reaction catalyzed by the N-terminal domain. This chain is Bifunctional protein GlmU, found in Streptococcus pyogenes serotype M49 (strain NZ131).